The following is a 262-amino-acid chain: Ribosome-recycling factor, mitochondrial (262 aa).

Residues 1 to 55 (MALGLKCFRMVHPTFRNYLAASIRPVSEVTLKTVHERQHGHRQYMAYSAVPVRHF) constitute a mitochondrion transit peptide.

This sequence belongs to the RRF family.

It is found in the mitochondrion. Responsible for the disassembly of ribosomes from messenger RNA at the termination of mitochondrial protein biosynthesis. Acts in collaboration with GFM2. Promotes mitochondrial ribosome recycling by dissolution of intersubunit contacts. This is Ribosome-recycling factor, mitochondrial from Homo sapiens (Human).